The chain runs to 222 residues: Probable pyridoxal 5'-phosphate synthase subunit SNO2 (222 aa).

58 to 60 contacts L-glutamine; that stretch reads GES. The Nucleophile role is filled by Cys91. Residues Arg120 and 151 to 152 each bind L-glutamine; that span reads IR. Residues His197 and Glu199 each act as charge relay system in the active site.

This sequence belongs to the glutaminase PdxT/SNO family.

It catalyses the reaction aldehydo-D-ribose 5-phosphate + D-glyceraldehyde 3-phosphate + L-glutamine = pyridoxal 5'-phosphate + L-glutamate + phosphate + 3 H2O + H(+). It carries out the reaction L-glutamine + H2O = L-glutamate + NH4(+). It functions in the pathway cofactor biosynthesis; pyridoxal 5'-phosphate biosynthesis. Catalyzes the hydrolysis of glutamine to glutamate and ammonia as part of the biosynthesis of pyridoxal 5'-phosphate. The resulting ammonia molecule is channeled to the active site of a SNZ isoform. The sequence is that of Probable pyridoxal 5'-phosphate synthase subunit SNO2 (SNO2) from Saccharomyces cerevisiae (strain ATCC 204508 / S288c) (Baker's yeast).